The primary structure comprises 267 residues: tRNA pseudouridine synthase A (267 aa).

The active-site Nucleophile is D51. Y109 serves as a coordination point for substrate.

The protein belongs to the tRNA pseudouridine synthase TruA family. Homodimer.

The catalysed reaction is uridine(38/39/40) in tRNA = pseudouridine(38/39/40) in tRNA. In terms of biological role, formation of pseudouridine at positions 38, 39 and 40 in the anticodon stem and loop of transfer RNAs. The polypeptide is tRNA pseudouridine synthase A (Staphylococcus saprophyticus subsp. saprophyticus (strain ATCC 15305 / DSM 20229 / NCIMB 8711 / NCTC 7292 / S-41)).